A 513-amino-acid polypeptide reads, in one-letter code: MQLNASEISNLIKDRIKGFDGAAESGSEGTVVSIADGIALIHGVSDVMYGEMVQFDEATFGMALNLERDSVGVVVLGEYEHISEGDKVTCTGRILEVPVGPELNGRVVDGLGRPIDGKGSIDAKVTSPIERIAPGVIERQSVDQPMMTGIKSIDSMIPVGRGQRELIIGDRQTGKTAIAIDAIISQKNTGVKCIYVAMGQKASTVNNVARKLEEYGAMDNTVIVAANASDPAALQYLAAYAGCAMGEYYRDRGEDALIIYDDLTKQAQAYRQISLLLRRPPGREAFPGDVFYLHSRLLERAARVNAEYVEKFTNGEVKGKTGSLTALPIIETQAGDVSAFVPTNVISITDGQIFLETGLFSQGIRPAVNAGLSVSRVGGSAQTKAIKKLGGGIRLDLAQYRELAAFAQFASDLDPATKAQLERGKRVTELMKQKQYSPLTIAEMAVSLYAANEGYLDDVEVEKVLDFEAALHAYLNSNNADLAAKINAKGDWNDEIISEVKAMIDAFKANGVY.

169-176 is a binding site for ATP; that stretch reads GDRQTGKT.

This sequence belongs to the ATPase alpha/beta chains family. In terms of assembly, F-type ATPases have 2 components, CF(1) - the catalytic core - and CF(0) - the membrane proton channel. CF(1) has five subunits: alpha(3), beta(3), gamma(1), delta(1), epsilon(1). CF(0) has three main subunits: a(1), b(2) and c(9-12). The alpha and beta chains form an alternating ring which encloses part of the gamma chain. CF(1) is attached to CF(0) by a central stalk formed by the gamma and epsilon chains, while a peripheral stalk is formed by the delta and b chains.

Its subcellular location is the cell inner membrane. The catalysed reaction is ATP + H2O + 4 H(+)(in) = ADP + phosphate + 5 H(+)(out). Functionally, produces ATP from ADP in the presence of a proton gradient across the membrane. The alpha chain is a regulatory subunit. The sequence is that of ATP synthase subunit alpha from Hydrogenovibrio crunogenus (strain DSM 25203 / XCL-2) (Thiomicrospira crunogena).